The sequence spans 195 residues: HTH-type transcriptional regulator BetI (195 aa).

The region spanning 8–68 is the HTH tetR-type domain; sequence SIRRRQLIDA…ATMRDITSQL (61 aa). A DNA-binding region (H-T-H motif) is located at residues 31–50; the sequence is TIAQIARRAGVSTGIISHYF.

It participates in amine and polyamine biosynthesis; betaine biosynthesis via choline pathway [regulation]. In terms of biological role, repressor involved in the biosynthesis of the osmoprotectant glycine betaine. It represses transcription of the choline transporter BetT and the genes of BetAB involved in the synthesis of glycine betaine. The polypeptide is HTH-type transcriptional regulator BetI (Escherichia coli (strain UTI89 / UPEC)).